A 65-amino-acid chain; its full sequence is Light-harvesting protein B-800-850 alpha chain C (65 aa).

Topologically, residues 1-11 are cytoplasmic; the sequence is MNQGRIWTVVS. A helical transmembrane segment spans residues 12–35; that stretch reads PTVGLPLLLGSVAAIAFAVHFAVL. A bacteriochlorophyll is bound at residue H31. Over 36 to 65 the chain is Periplasmic; that stretch reads ENTSWVAAFMNGKSVAAAPAPAAPAAPAKK.

It belongs to the antenna complex alpha subunit family. In terms of assembly, the core complex is formed by different alpha and beta chains, binding bacteriochlorophyll molecules, and arranged most probably in tetrameric structures disposed around the reaction center. The non-pigmented gamma chains may constitute additional components.

It localises to the cell inner membrane. Functionally, antenna complexes are light-harvesting systems, which transfer the excitation energy to the reaction centers. In Rhodopseudomonas palustris, this protein is Light-harvesting protein B-800-850 alpha chain C (pucAC).